Here is a 138-residue protein sequence, read N- to C-terminus: MRTLWIVAVLLLGVEGSLVQFETLIMKIAGRSGLLWYSAYGCYCGWGGHGLPQDATDRCCFVHDCCYGKATDCNPKTVSYTYSEENGEIVCGGDNPCGTQICECDKAAAICFRDNIPSYSNKYWLFLPKNCRGDPEPC.

Residues 1–16 (MRTLWIVAVLLLGVEG) form the signal peptide. Intrachain disulfides connect Cys42–Cys131, Cys44–Cys60, Cys59–Cys111, Cys65–Cys138, Cys66–Cys104, Cys73–Cys97, and Cys91–Cys102. Residues Tyr43, Gly45, and Gly47 each contribute to the Ca(2+) site. The active site involves His63. Residue Asp64 participates in Ca(2+) binding. The active site involves Asp105.

It belongs to the phospholipase A2 family. Group II subfamily. D49 sub-subfamily. It depends on Ca(2+) as a cofactor. As to expression, expressed by the venom gland.

The protein localises to the secreted. It carries out the reaction a 1,2-diacyl-sn-glycero-3-phosphocholine + H2O = a 1-acyl-sn-glycero-3-phosphocholine + a fatty acid + H(+). Snake venom phospholipase A2 (PLA2) that significantly inhibits ADP-induced platelet aggregation in platelet-rich plasma of human, rabbit and guinea pig. PLA2 catalyzes the calcium-dependent hydrolysis of the 2-acyl groups in 3-sn-phosphoglycerides. This Crotalus viridis viridis (Prairie rattlesnake) protein is Acidic phospholipase A2 Cvv-E6a.